The following is a 172-amino-acid chain: Adenine phosphoribosyltransferase (172 aa).

The protein belongs to the purine/pyrimidine phosphoribosyltransferase family. As to quaternary structure, homodimer.

It is found in the cytoplasm. The enzyme catalyses AMP + diphosphate = 5-phospho-alpha-D-ribose 1-diphosphate + adenine. Its pathway is purine metabolism; AMP biosynthesis via salvage pathway; AMP from adenine: step 1/1. Functionally, catalyzes a salvage reaction resulting in the formation of AMP, that is energically less costly than de novo synthesis. In Prochlorococcus marinus (strain MIT 9313), this protein is Adenine phosphoribosyltransferase.